A 218-amino-acid chain; its full sequence is Large ribosomal subunit protein uL1 (218 aa).

The protein belongs to the universal ribosomal protein uL1 family. In terms of assembly, part of the 50S ribosomal subunit.

Functionally, binds directly to 23S rRNA. Probably involved in E site tRNA release. Its function is as follows. Protein L1 is also a translational repressor protein, it controls the translation of its operon by binding to its mRNA. This Metallosphaera sedula (strain ATCC 51363 / DSM 5348 / JCM 9185 / NBRC 15509 / TH2) protein is Large ribosomal subunit protein uL1.